A 187-amino-acid polypeptide reads, in one-letter code: UPF0301 protein Sbal195_3177 (187 aa).

This sequence belongs to the UPF0301 (AlgH) family.

This Shewanella baltica (strain OS195) protein is UPF0301 protein Sbal195_3177.